The primary structure comprises 478 residues: tRNA modification GTPase MnmE (478 aa).

(6S)-5-formyl-5,6,7,8-tetrahydrofolate-binding residues include arginine 36, glutamate 94, and lysine 133. In terms of domain architecture, TrmE-type G spans 230 to 402 (GIHVVLAGRP…LVETLCAKVG (173 aa)). Asparagine 240 serves as a coordination point for K(+). GTP-binding positions include 240–245 (NAGKSS), 259–265 (TDVAGTT), and 284–287 (DTAG). A Mg(2+)-binding site is contributed by serine 244. Positions 259, 261, and 264 each coordinate K(+). Threonine 265 contributes to the Mg(2+) binding site. Lysine 478 lines the (6S)-5-formyl-5,6,7,8-tetrahydrofolate pocket.

It belongs to the TRAFAC class TrmE-Era-EngA-EngB-Septin-like GTPase superfamily. TrmE GTPase family. As to quaternary structure, homodimer. Heterotetramer of two MnmE and two MnmG subunits. K(+) is required as a cofactor.

Its subcellular location is the cytoplasm. Functionally, exhibits a very high intrinsic GTPase hydrolysis rate. Involved in the addition of a carboxymethylaminomethyl (cmnm) group at the wobble position (U34) of certain tRNAs, forming tRNA-cmnm(5)s(2)U34. The sequence is that of tRNA modification GTPase MnmE from Psychrobacter arcticus (strain DSM 17307 / VKM B-2377 / 273-4).